The chain runs to 283 residues: Elongation factor Ts (283 aa).

The tract at residues 80–83 (TDFV) is involved in Mg(2+) ion dislocation from EF-Tu.

It belongs to the EF-Ts family.

The protein resides in the cytoplasm. Functionally, associates with the EF-Tu.GDP complex and induces the exchange of GDP to GTP. It remains bound to the aminoacyl-tRNA.EF-Tu.GTP complex up to the GTP hydrolysis stage on the ribosome. This Pectobacterium atrosepticum (strain SCRI 1043 / ATCC BAA-672) (Erwinia carotovora subsp. atroseptica) protein is Elongation factor Ts.